A 281-amino-acid chain; its full sequence is Oxidase pynE (281 aa).

Belongs to the avfA family.

It functions in the pathway secondary metabolite biosynthesis. In terms of biological role, oxidase; part of the gene cluster that mediates the biosynthesis of pyranonigrins, a family of antioxidative compounds. The first step of pyranonigrins biosynthesis is performed by the hybrid PKS-NRPS synthetase that condenses 6 malonyl-CoA units to an acetyl starter unit, to form a 1,3,5-trioxotetradecane-6,8-dienyl-ACP. The enoyl reductase (ER) domain of pynA is likely to be functional during the first two rounds of polyketide chain extension, to generate the saturated C-C bonds of the alkyl side chain. PynA subsequently forms the amide bond between the acyl chain and L-serine. Although pynA has a terminal reductase domain, it appears to require the thioesterase pynI for the release of the straight-chain intermediate from pynA via the formation of a tetramic acid pyranonigrin J. The methyltransferase pynC then coverts pyranonigrin J to pyranonigrin I via N-methylation. The FAD-dependent monooxygenase pynG catalyzes an epoxidation-mediated cyclization to form the dihydro-gamma-pyrone moiety, followed by pynD-catalyzed oxidation of the alcohol to the ketone and enolization to yield the characteristic tetramic acid-fused gamma-pyrone core of pyranonigrin H. Pyranonigrin H is substrate of pynH for dehydration-mediated exo-methylene formation from the serine side chain to produce pyranonigrin E, before the oxidase pynE reduces the exo-methylene of pyranonigrin E into a pendant methyl to form pyranonigrin G. The FAD-linked oxidoreductase pynB performs the reverse reaction and converts pyranonigrin G back to pyranonigrin E. In Aspergillus niger (strain ATCC MYA-4892 / CBS 513.88 / FGSC A1513), this protein is Oxidase pynE.